Reading from the N-terminus, the 248-residue chain is Protein PARTING DANCERS homolog (248 aa).

Residues 1-10 are compositionally biased toward polar residues; the sequence is MERSTHSTGW. Residues 1–25 form a disordered region; the sequence is MERSTHSTGWTCLPPPPPEPAAPGR.

Belongs to the ERCC1/RAD10/SWI10 family. As to quaternary structure, interacts with SHOC1 (via C-terminus). Interacts with HEI10. In terms of tissue distribution, highly expressed in anthers and pistil during meiosis. Expressed in pollen mother cells (PMCs) during meiosis. Expressed at low levels in roots, shoots, leaves, flowers, and glumes.

Its subcellular location is the chromosome. The protein localises to the nucleus. It is found in the cytoplasm. It localises to the cell membrane. Essential for normal crossover (CO) formation during meiosis. Essential component for the formation of class I meiotic COs. Interacts with SHOC1, another meiotic component, to regulate CO formation, possibly by stabilizing the recombination intermediates during meiosis. PTD and SHOC1 may form transient heterotrimeric or heterotetrameric complexes with HEI10 and/or ZIP4 to promote class I COs formation. Does not seem to be involved in early meiotic recombination steps involving double-strand break (DSB) formation, processing, and single-strand invasion. Does not seem to be involved in homologous pairing or synaptonemal complex (SC) assembly. The sequence is that of Protein PARTING DANCERS homolog from Oryza sativa subsp. japonica (Rice).